Here is a 202-residue protein sequence, read N- to C-terminus: ATP-dependent Clp protease proteolytic subunit (202 aa).

S101 functions as the Nucleophile in the catalytic mechanism. H126 is a catalytic residue.

Belongs to the peptidase S14 family. As to quaternary structure, component of the chloroplastic Clp protease core complex.

It localises to the plastid. The protein resides in the chloroplast stroma. The enzyme catalyses Hydrolysis of proteins to small peptides in the presence of ATP and magnesium. alpha-casein is the usual test substrate. In the absence of ATP, only oligopeptides shorter than five residues are hydrolyzed (such as succinyl-Leu-Tyr-|-NHMec, and Leu-Tyr-Leu-|-Tyr-Trp, in which cleavage of the -Tyr-|-Leu- and -Tyr-|-Trp bonds also occurs).. In terms of biological role, cleaves peptides in various proteins in a process that requires ATP hydrolysis. Has a chymotrypsin-like activity. Plays a major role in the degradation of misfolded proteins. This is ATP-dependent Clp protease proteolytic subunit from Illicium oligandrum (Star anise).